The chain runs to 263 residues: Proteasome subunit beta type-5 (263 aa).

A propeptide spans 1 to 59 (removed in mature form); the sequence is MALASVLERPLSVNRRGFFGLGGRADLLDLGPGSPSDGLSLAAPSWGVPEEPRIEILHG. Thr60 acts as the Nucleophile in catalysis. Ala108 provides a ligand contact to bortezomib.

This sequence belongs to the peptidase T1B family. The 26S proteasome consists of a 20S proteasome core and two 19S regulatory subunits. The 20S proteasome core is a barrel-shaped complex made of 28 subunits that are arranged in four stacked rings. The two outer rings are each formed by seven alpha subunits, and the two inner rings are formed by seven beta subunits. The proteolytic activity is exerted by three beta-subunits PSMB5, PSMB6 and PSMB7. Directly interacts with POMP. Interacts with ABCB1 and TAP1.

The protein resides in the cytoplasm. It is found in the nucleus. It carries out the reaction Cleavage of peptide bonds with very broad specificity.. Functionally, component of the 20S core proteasome complex involved in the proteolytic degradation of most intracellular proteins. This complex plays numerous essential roles within the cell by associating with different regulatory particles. Associated with two 19S regulatory particles, forms the 26S proteasome and thus participates in the ATP-dependent degradation of ubiquitinated proteins. The 26S proteasome plays a key role in the maintenance of protein homeostasis by removing misfolded or damaged proteins that could impair cellular functions, and by removing proteins whose functions are no longer required. Associated with the PA200 or PA28, the 20S proteasome mediates ubiquitin-independent protein degradation. This type of proteolysis is required in several pathways including spermatogenesis (20S-PA200 complex) or generation of a subset of MHC class I-presented antigenic peptides (20S-PA28 complex). Within the 20S core complex, PSMB5 displays a chymotrypsin-like activity. This is Proteasome subunit beta type-5 from Bos taurus (Bovine).